The following is a 195-amino-acid chain: Imidazoleglycerol-phosphate dehydratase (195 aa).

The protein belongs to the imidazoleglycerol-phosphate dehydratase family.

It localises to the cytoplasm. The enzyme catalyses D-erythro-1-(imidazol-4-yl)glycerol 3-phosphate = 3-(imidazol-4-yl)-2-oxopropyl phosphate + H2O. It participates in amino-acid biosynthesis; L-histidine biosynthesis; L-histidine from 5-phospho-alpha-D-ribose 1-diphosphate: step 6/9. The polypeptide is Imidazoleglycerol-phosphate dehydratase (Pelobacter propionicus (strain DSM 2379 / NBRC 103807 / OttBd1)).